Reading from the N-terminus, the 859-residue chain is MRRGPRVALVLGLLRIYLAQANFAPHFFDNGVGSTNGNMALFSLPEDTPVGSHVYTLNGTDPEGDPISYHISFDPSTRSVFSVDPNFGNITLVEELDREREDEIEAIISISDGLNLVAEKVVILVTDANDEAPRFIQEPYIIRVPENIPAGSSIFKVQAEDKDTGSGGSVTYSLQNLHSSKFSMDRHSGVLRLQAGATLDYEKSRAHYITVIAKDGGGRLRGADMVFSATTTVTINVEDVQDTAPIFVGTPYYGYVYEDTLPGSEVLTVVAIDGDRGKPNHILYRLLNESDGIFEINETSGAISVLQSPALLRREVYELHVQVTEVNSPGSPAAQATVPVTIRIVDLNNHPPTFYGESGPQNKFELSMFEHPPQGEILRGLKITVNDSDQGANAKFNLRLVGPGGIFRVVPQTVLNEAQVTIIVENSAAIDFEKSKLLTFKLLAIEVNTPEKFSSTADIVIQLLDTNDNVPKFTSHYYIARIPENAPGGSNVVAVTAVDPDTGPWGKVHYSIYGTGSDLFLIHPSTGLIYTQPWASLDAEGTSRYNFYVKAEDMDGRYSLAEVFVTLLDVNDHYPQFVQSVQEKTMVLGTPLKIEATDQDAEEPNNLVDYSITRAEPVNVFDIDAHTGEIRLKNSIRSLEALHNITPSGDYSWSLQVQAKDRGSPSFSTTALLKIDITDTERLSRGSMAAFLIQTKDNPMKAVGVLAGVMAIVVAITVLISTATFWRNKKSNKVLPVRRVLRRRPSPAPHTVRIEWLKFRRAKAATKFILKEDSPNENCNNSRVGVMVPPRAPALPPPPKMASSMVAQQTVPTVSGSLTPQPSPQLPTPKTLGGPVQSSLVSELKQKFEKKSLDNKAYI.

A signal peptide spans 1-21; sequence MRRGPRVALVLGLLRIYLAQA. The Extracellular segment spans residues 22–701; sequence NFAPHFFDNG…LIQTKDNPMK (680 aa). 6 Cadherin domains span residues 36 to 135, 136 to 247, 248 to 354, 360 to 473, 474 to 577, and 569 to 691; these read NGNM…APRF, IQEP…APIF, VGTP…PPTF, PQNK…VPKF, TSHY…YPQF, and DVND…MAAF. Residues Asn-58 and Asn-89 are each glycosylated (N-linked (GlcNAc...) asparagine). Asn-288 carries N-linked (GlcNAc...) asparagine glycosylation. A helical membrane pass occupies residues 702–722; sequence AVGVLAGVMAIVVAITVLIST. The Cytoplasmic segment spans residues 723–859; it reads ATFWRNKKSN…KKSLDNKAYI (137 aa). Positions 793–838 are disordered; the sequence is PALPPPPKMASSMVAQQTVPTVSGSLTPQPSPQLPTPKTLGGPVQS. Positions 805–816 are enriched in polar residues; the sequence is MVAQQTVPTVSG.

Interacts with PROM1. In terms of processing, undergoes proteolytic cleavage; produces a soluble 95 kDa N-terminal fragment and a 25 kDa cell-associated C-terminal fragment. Expressed in cone and rod photoreceptor cells (at protein level). Expressed in photoreceptor cells of the outer nuclear layer of the retina. Expressed in mitral and tufted cells in the olfactory bulb.

It is found in the cell membrane. Potential calcium-dependent cell-adhesion protein. May be required for the structural integrity of the outer segment (OS) of photoreceptor cells. The sequence is that of Cadherin-related family member 1 (Cdhr1) from Mus musculus (Mouse).